Reading from the N-terminus, the 174-residue chain is ATP synthase subunit delta (174 aa).

The protein belongs to the ATPase delta chain family. As to quaternary structure, F-type ATPases have 2 components, F(1) - the catalytic core - and F(0) - the membrane proton channel. F(1) has five subunits: alpha(3), beta(3), gamma(1), delta(1), epsilon(1). F(0) has three main subunits: a(1), b(2) and c(10-14). The alpha and beta chains form an alternating ring which encloses part of the gamma chain. F(1) is attached to F(0) by a central stalk formed by the gamma and epsilon chains, while a peripheral stalk is formed by the delta and b chains.

The protein localises to the cell inner membrane. Its function is as follows. F(1)F(0) ATP synthase produces ATP from ADP in the presence of a proton or sodium gradient. F-type ATPases consist of two structural domains, F(1) containing the extramembraneous catalytic core and F(0) containing the membrane proton channel, linked together by a central stalk and a peripheral stalk. During catalysis, ATP synthesis in the catalytic domain of F(1) is coupled via a rotary mechanism of the central stalk subunits to proton translocation. Functionally, this protein is part of the stalk that links CF(0) to CF(1). It either transmits conformational changes from CF(0) to CF(1) or is implicated in proton conduction. This Neorickettsia sennetsu (strain ATCC VR-367 / Miyayama) (Ehrlichia sennetsu) protein is ATP synthase subunit delta.